A 329-amino-acid polypeptide reads, in one-letter code: Peroxidase 17 (329 aa).

The first 19 residues, 1-19, serve as a signal peptide directing secretion; sequence MSLLPHLILYLTLLTVVVT. 4 cysteine pairs are disulfide-bonded: C32-C112, C65-C70, C118-C315, and C197-C229. H63 (proton acceptor) is an active-site residue. Positions 64, 67, 69, 71, and 73 each coordinate Ca(2+). P160 serves as a coordination point for substrate. N-linked (GlcNAc...) asparagine glycans are attached at residues N165 and N177. H190 is a binding site for heme b. A Ca(2+)-binding site is contributed by S191. 2 N-linked (GlcNAc...) asparagine glycosylation sites follow: N206 and N236. The Ca(2+) site is built by D242, T244, and D249.

The protein belongs to the peroxidase family. Classical plant (class III) peroxidase subfamily. Requires heme b as cofactor. Ca(2+) is required as a cofactor.

Its subcellular location is the secreted. The protein resides in the vacuole. The catalysed reaction is 2 a phenolic donor + H2O2 = 2 a phenolic radical donor + 2 H2O. Functionally, removal of H(2)O(2), oxidation of toxic reductants, biosynthesis and degradation of lignin, suberization, auxin catabolism, response to environmental stresses such as wounding, pathogen attack and oxidative stress. These functions might be dependent on each isozyme/isoform in each plant tissue. The polypeptide is Peroxidase 17 (PER17) (Arabidopsis thaliana (Mouse-ear cress)).